The sequence spans 138 residues: Large ribosomal subunit protein uL16 (138 aa).

Residues 1–19 (MLIPRKVAHRKQHHPKRTG) show a composition bias toward basic residues. Positions 1–22 (MLIPRKVAHRKQHHPKRTGAAK) are disordered.

Belongs to the universal ribosomal protein uL16 family. As to quaternary structure, part of the 50S ribosomal subunit.

Functionally, binds 23S rRNA and is also seen to make contacts with the A and possibly P site tRNAs. In Parafrankia sp. (strain EAN1pec), this protein is Large ribosomal subunit protein uL16.